The following is an 844-amino-acid chain: Translation elongation factor 2 (844 aa).

One can recognise a tr-type G domain in the interval 17–348 (RNIRNMSVIA…MIAIHLPSPV (332 aa)). 26–33 (AHVDHGKS) lines the GTP pocket. A phosphothreonine mark is found at threonine 57 and threonine 59. GTP is bound by residues 162–165 (NKMD) and 219–221 (SGL). Serine 488 is modified (phosphoserine). Diphthamide is present on histidine 701.

It belongs to the TRAFAC class translation factor GTPase superfamily. Classic translation factor GTPase family. EF-G/EF-2 subfamily. In terms of processing, phosphorylation by EF-2 kinase completely inactivates EF-2.

The protein resides in the cytoplasm. It carries out the reaction GTP + H2O = GDP + phosphate + H(+). Functionally, catalyzes the GTP-dependent ribosomal translocation step during translation elongation. During this step, the ribosome changes from the pre-translocational (PRE) to the post-translocational (POST) state as the newly formed A-site-bound peptidyl-tRNA and P-site-bound deacylated tRNA move to the P and E sites, respectively. Catalyzes the coordinated movement of the two tRNA molecules, the mRNA and conformational changes in the ribosome. The sequence is that of Translation elongation factor 2 from Bombyx mori (Silk moth).